The chain runs to 685 residues: Glycine--tRNA ligase beta subunit (685 aa).

Belongs to the class-II aminoacyl-tRNA synthetase family. As to quaternary structure, tetramer of two alpha and two beta subunits.

Its subcellular location is the cytoplasm. It carries out the reaction tRNA(Gly) + glycine + ATP = glycyl-tRNA(Gly) + AMP + diphosphate. The polypeptide is Glycine--tRNA ligase beta subunit (Azotobacter vinelandii (strain DJ / ATCC BAA-1303)).